We begin with the raw amino-acid sequence, 525 residues long: Mitochondrial-processing peptidase subunit alpha (525 aa).

The N-terminal 33 residues, 1 to 33 (MAAMVLAATRLLRGSGSWGRSRPRFGDPAYRRF), are a transit peptide targeting the mitochondrion. K64 bears the N6-succinyllysine mark. Position 299 is an N6-acetyllysine (K299).

It belongs to the peptidase M16 family. Heterodimer of PMPCA (alpha) and PMPCB (beta) subunits, forming the mitochondrial processing protease (MPP) in which PMPCA is involved in substrate recognition and binding and PMPCB is the catalytic subunit.

The protein localises to the mitochondrion matrix. It is found in the mitochondrion inner membrane. In terms of biological role, substrate recognition and binding subunit of the essential mitochondrial processing protease (MPP), which cleaves the mitochondrial sequence off newly imported precursors proteins. In Bos taurus (Bovine), this protein is Mitochondrial-processing peptidase subunit alpha (PMPCA).